A 473-amino-acid chain; its full sequence is UDP-N-acetylmuramate--L-alanine ligase (473 aa).

ATP is bound at residue 115–121 (GTHGKTT).

It belongs to the MurCDEF family.

The protein resides in the cytoplasm. It catalyses the reaction UDP-N-acetyl-alpha-D-muramate + L-alanine + ATP = UDP-N-acetyl-alpha-D-muramoyl-L-alanine + ADP + phosphate + H(+). Its pathway is cell wall biogenesis; peptidoglycan biosynthesis. Cell wall formation. This chain is UDP-N-acetylmuramate--L-alanine ligase, found in Rhizorhabdus wittichii (strain DSM 6014 / CCUG 31198 / JCM 15750 / NBRC 105917 / EY 4224 / RW1) (Sphingomonas wittichii).